The primary structure comprises 646 residues: mRNA 3'-end-processing protein RNA14 (646 aa).

HAT repeat units lie at residues 46 to 78 (DDYD…SELQ), 80 to 114 (NEFD…YVRR), 128 to 160 (VVIK…FLHQ), 171 to 204 (QRLD…WEQE), 249 to 281 (ANKN…WEKE), and 290 to 322 (ALKD…YEFD). The segment at 571-599 (DGDPSGVDKSFKKRQIENDENLPDSKRQK) is disordered.

It is found in the nucleus. The protein resides in the cytoplasm. In terms of biological role, component of the cleavage factor IA (CFIA) complex, which is involved in the endonucleolytic cleavage during polyadenylation-dependent pre-mRNA 3'-end formation. This Candida glabrata (strain ATCC 2001 / BCRC 20586 / JCM 3761 / NBRC 0622 / NRRL Y-65 / CBS 138) (Yeast) protein is mRNA 3'-end-processing protein RNA14 (RNA14).